We begin with the raw amino-acid sequence, 119 residues long: MSLKIRLTRGGAKKRPYYRIVVADSRSPRDGRFIEKVGVYDPMKPKDDPARVSLESEKIQAWLAKGAQPTDRVLRFLDAAGLAKRPARNNPKKAEPGQKAKERAAARAEKAGAGDDAAA.

Residues 81–119 form a disordered region; it reads GLAKRPARNNPKKAEPGQKAKERAAARAEKAGAGDDAAA. Basic and acidic residues predominate over residues 92-113; that stretch reads KKAEPGQKAKERAAARAEKAGA.

Belongs to the bacterial ribosomal protein bS16 family.

This Methylobacterium sp. (strain 4-46) protein is Small ribosomal subunit protein bS16.